Reading from the N-terminus, the 618-residue chain is MSLSTVLSLSTQFAWLIPIYGFAGMVVSLPWATGWIQRNAPRTPAYLNLIISLVAFLHGSLALQDVLQNGAHIIRFPWLNLSQADLQLNISLDISPTNLAALELITGLSFIAQLYALGYLDKEWALARFFALAGFFEGAMSGVVLSDSLFQSYFLLEMLTLSTYLLVGFWYAQPLVVTAARDAFLTKRVGDVMLLMGVVALSAFAGGMEFEDLYTWADKNTLTPLATTLLGLALIAGPIGKCAQFPMHLWLDEAMEGPNPASILRNSVVVTCGAIVLMKLMPILHHSQITIAVLLAIGTISALGGSLVSIAQVDIKRTLSYSTTAYLGLVFIAIALEQPALALLTLFAHAIAKALLSMSIGSVIAVSNCQDITELGGLGSRMPATTSAYLIAGAGLTGLLPLGCFWCFGLGMDLIGRQAPWFASIYLITNTLTALNLTRVFRQVFLGAPMPKTRRAAEVNWQMALPMVVLLVAVALTPWMMARIDPLPGIGAFSAITGITVATSGLVGLTIGAIVPLNKAWSRSLNQPVRWVQDLLAFDFYTDRFYRLTIVNIVSGCSYIASWFDTAIVNGFVNYVGRFSMDSAEGLRLSISGRSQSYILTVVITIVFLLAALSWLVS.

The next 17 helical transmembrane spans lie at 16–36 (LIPI…TGWI), 43–63 (TPAY…SLAL), 99–119 (LAAL…ALGY), 129–149 (FFAL…SDSL), 152–172 (SYFL…FWYA), 190–210 (GDVM…GMEF), 220–240 (NTLT…GPIG), 267–287 (SVVV…LHHS), 291–311 (IAVL…VSIA), 318–335 (TLSY…IAIA), 348–368 (AHAI…AVSN), 390–410 (LIAG…CFGL), 419–438 (APWF…LNLT), 461–481 (WQMA…PWMM), 495–515 (AITG…GAIV), 553–573 (IVSG…NGFV), and 597–617 (SYIL…SWLV).

It belongs to the complex I subunit 5 family. As to quaternary structure, NDH is composed of at least 16 different subunits, 5 of which are encoded in the nucleus.

It is found in the plastid. The protein localises to the organellar chromatophore thylakoid membrane. The catalysed reaction is a plastoquinone + NADH + (n+1) H(+)(in) = a plastoquinol + NAD(+) + n H(+)(out). It catalyses the reaction a plastoquinone + NADPH + (n+1) H(+)(in) = a plastoquinol + NADP(+) + n H(+)(out). Functionally, NDH shuttles electrons from NAD(P)H:plastoquinone, via FMN and iron-sulfur (Fe-S) centers, to quinones in the photosynthetic chain and possibly in a chloroplast respiratory chain. The immediate electron acceptor for the enzyme in this species is believed to be plastoquinone. Couples the redox reaction to proton translocation, and thus conserves the redox energy in a proton gradient. The polypeptide is NAD(P)H-quinone oxidoreductase subunit 5, organellar chromatophore 2 (ndhF2) (Paulinella chromatophora).